A 636-amino-acid chain; its full sequence is Chaperone protein DnaK (636 aa).

The residue at position 198 (threonine 198) is a Phosphothreonine; by autocatalysis. A disordered region spans residues glutamine 602–lysine 636. Acidic residues predominate over residues alanine 626–lysine 636.

This sequence belongs to the heat shock protein 70 family.

Its function is as follows. Acts as a chaperone. This chain is Chaperone protein DnaK, found in Geobacter sulfurreducens (strain ATCC 51573 / DSM 12127 / PCA).